Reading from the N-terminus, the 349-residue chain is Isopentenyl-diphosphate delta-isomerase (349 aa).

Position 6-7 (6-7) interacts with substrate; it reads RK. Residues 62–64, Ser93, and Asn122 contribute to the FMN site; that span reads AMT. Gln152 lines the substrate pocket. Glu153 is a binding site for Mg(2+). FMN contacts are provided by residues Lys184, Thr214, 258 to 259, and 280 to 281; these read GG and AG.

Belongs to the IPP isomerase type 2 family. In terms of assembly, homooctamer. Dimer of tetramers. FMN is required as a cofactor. The cofactor is NADPH. It depends on Mg(2+) as a cofactor.

The protein resides in the cytoplasm. The enzyme catalyses isopentenyl diphosphate = dimethylallyl diphosphate. In terms of biological role, involved in the biosynthesis of isoprenoids. Catalyzes the 1,3-allylic rearrangement of the homoallylic substrate isopentenyl (IPP) to its allylic isomer, dimethylallyl diphosphate (DMAPP). In Bacillus cereus (strain ATCC 14579 / DSM 31 / CCUG 7414 / JCM 2152 / NBRC 15305 / NCIMB 9373 / NCTC 2599 / NRRL B-3711), this protein is Isopentenyl-diphosphate delta-isomerase.